Reading from the N-terminus, the 149-residue chain is 3-dehydroquinate dehydratase (149 aa).

Catalysis depends on Y26, which acts as the Proton acceptor. Residues N77, H83, and D90 each contribute to the substrate site. Catalysis depends on H103, which acts as the Proton donor. Residues L104 to S105 and R114 contribute to the substrate site.

Belongs to the type-II 3-dehydroquinase family. In terms of assembly, homododecamer.

The catalysed reaction is 3-dehydroquinate = 3-dehydroshikimate + H2O. It participates in metabolic intermediate biosynthesis; chorismate biosynthesis; chorismate from D-erythrose 4-phosphate and phosphoenolpyruvate: step 3/7. Catalyzes a trans-dehydration via an enolate intermediate. The sequence is that of 3-dehydroquinate dehydratase from Vibrio vulnificus (strain YJ016).